Reading from the N-terminus, the 393-residue chain is MANDFLFTSESVSEGHPDKVADQISDAILDAIFEQDPRSRVAAETLTNTGLVVLAGEITTNAHVDYIQVARDTIKRIGYDNTEYGIDYKGCAVLVAYDKQSNDIAQGVDHASDDHLNTGAGDQGLMFGYACDETPELMPAPIYYAHRLVERQAQLRKDGRLPFLRPDAKSQVTMRYVDGKPHSIDTIVLSTQHSPEQSLGDKMIPSFYEAIREELIKPVLPKEWITAETQYLINPTGRFVIGGPQGDCGLTGRKIIVDTYGGACPHGGGAFSGKDPTKVDRSAAYAARYVAKNIVAAGLARQCQIQVAYAIGVARPMNITVYTEGTGVIPDAEIAKLVEAHFDLRPKGIIQMLDLLRPIYQKTAAYGHFGREEPEFTWERTDKAQVLRAAAGL.

His-16 is an ATP binding site. Mg(2+) is bound at residue Asp-18. K(+) is bound at residue Glu-44. Glu-57 and Gln-100 together coordinate L-methionine. Positions Gln-100 to His-110 are flexible loop. ATP-binding positions include Asp-167–Lys-169, Arg-238–Phe-239, Asp-247, Arg-253–Lys-254, Ala-270, and Lys-274. Asp-247 serves as a coordination point for L-methionine. Lys-278 contacts L-methionine.

It belongs to the AdoMet synthase family. Homotetramer; dimer of dimers. The cofactor is Mg(2+). It depends on K(+) as a cofactor.

The protein resides in the cytoplasm. The catalysed reaction is L-methionine + ATP + H2O = S-adenosyl-L-methionine + phosphate + diphosphate. Its pathway is amino-acid biosynthesis; S-adenosyl-L-methionine biosynthesis; S-adenosyl-L-methionine from L-methionine: step 1/1. Catalyzes the formation of S-adenosylmethionine (AdoMet) from methionine and ATP. The overall synthetic reaction is composed of two sequential steps, AdoMet formation and the subsequent tripolyphosphate hydrolysis which occurs prior to release of AdoMet from the enzyme. This chain is S-adenosylmethionine synthase, found in Leptothrix cholodnii (strain ATCC 51168 / LMG 8142 / SP-6) (Leptothrix discophora (strain SP-6)).